The primary structure comprises 954 residues: Glycine dehydrogenase (decarboxylating) (954 aa).

Lysine 706 is modified (N6-(pyridoxal phosphate)lysine).

Belongs to the GcvP family. As to quaternary structure, the glycine cleavage system is composed of four proteins: P, T, L and H. The cofactor is pyridoxal 5'-phosphate.

The enzyme catalyses N(6)-[(R)-lipoyl]-L-lysyl-[glycine-cleavage complex H protein] + glycine + H(+) = N(6)-[(R)-S(8)-aminomethyldihydrolipoyl]-L-lysyl-[glycine-cleavage complex H protein] + CO2. The glycine cleavage system catalyzes the degradation of glycine. The P protein binds the alpha-amino group of glycine through its pyridoxal phosphate cofactor; CO(2) is released and the remaining methylamine moiety is then transferred to the lipoamide cofactor of the H protein. The protein is Glycine dehydrogenase (decarboxylating) of Pseudomonas syringae pv. tomato (strain ATCC BAA-871 / DC3000).